The chain runs to 520 residues: Cytochrome P450 734A1 (520 aa).

The helical transmembrane segment at 13 to 33 (VLVLSVILSLVIVKGMSLLWW) threads the bilayer. Position 463 (Cys463) interacts with heme.

Belongs to the cytochrome P450 family. Heme serves as cofactor.

Its subcellular location is the membrane. Cytochrome P450 involved in brassinosteroids (BRs) inactivation and regulation of BRs homeostasis. Inactivates the BRs castasterone (CS) and brassinolide (BL) through carbon 26 hydroxylation. Acts in association with CYP72C1 to inactivate BRs and modulate photomorphogenesis. This chain is Cytochrome P450 734A1 (CYP734A1), found in Arabidopsis thaliana (Mouse-ear cress).